We begin with the raw amino-acid sequence, 368 residues long: D-Ala-D/L-Ala epimerase (368 aa).

Residues threonine 135 and 160–162 contribute to the substrate site; that span reads KVK. Mg(2+)-binding residues include aspartate 190, glutamate 216, and aspartate 241. Residues lysine 265 and 318–320 each bind substrate; that span reads DFD.

It belongs to the mandelate racemase/muconate lactonizing enzyme family. Mg(2+) is required as a cofactor.

Functionally, catalyzes the epimerization of D-Ala-D-Ala to D-Ala-L-Ala. Has broad substrate specificity and catalyzes the epimerization of a variety of dipeptides containing an N-terminal Ala followed by a hydrophobic or polar residue, such as Val, Ser and Met (in vitro). The sequence is that of D-Ala-D/L-Ala epimerase (tfdD) from Cytophaga hutchinsonii (strain ATCC 33406 / DSM 1761 / CIP 103989 / NBRC 15051 / NCIMB 9469 / D465).